Reading from the N-terminus, the 250-residue chain is ATP synthase subunit a (250 aa).

6 helical membrane-spanning segments follow: residues Phe26–Leu46, Phe84–Val104, Ile114–Tyr134, Leu143–Ile163, Phe193–Ile213, and Val216–Leu236.

It belongs to the ATPase A chain family. As to quaternary structure, F-type ATPases have 2 components, CF(1) - the catalytic core - and CF(0) - the membrane proton channel. CF(1) has five subunits: alpha(3), beta(3), gamma(1), delta(1), epsilon(1). CF(0) has three main subunits: a(1), b(2) and c(9-12). The alpha and beta chains form an alternating ring which encloses part of the gamma chain. CF(1) is attached to CF(0) by a central stalk formed by the gamma and epsilon chains, while a peripheral stalk is formed by the delta and b chains.

The protein resides in the cell inner membrane. Functionally, key component of the proton channel; it plays a direct role in the translocation of protons across the membrane. This is ATP synthase subunit a from Sinorhizobium medicae (strain WSM419) (Ensifer medicae).